A 573-amino-acid chain; its full sequence is 60 kDa lysophospholipase (573 aa).

Residues 9–355 form the Asparaginase/glutaminase domain; it reads RRLLAVYTGG…DVRKELLTKD (347 aa). The active-site Acyl-ester intermediate is the threonine 19. Residues 41–350 are asparaginase; sequence TLPMFHDEEH…PGLSLDVRKE (310 aa). Substrate-binding positions include 84–86 and 116–117; these read DSS and TD. 5 ANK repeats span residues 141–170, 399–429, 433–462, 466–495, and 533–562; these read GAQVPIHALWSDGRENLLGALLMAGQYVIP, ALVPSLACAAAHAGDVEALQALVELGSDLGL, NGQTPLHAAARGGHTEAVTMLLQRGVDVNT, DGFSPLLLAVRGRHPGVIGLLREAGASLST, and DGHSALHVAEAAGNLAVVAFLQSLEGAVGA.

In the N-terminal section; belongs to the asparaginase 1 family. In terms of assembly, monomer.

The catalysed reaction is a 1-acyl-sn-glycero-3-phosphocholine + H2O = sn-glycerol 3-phosphocholine + a fatty acid + H(+). It carries out the reaction L-asparagine + H2O = L-aspartate + NH4(+). The enzyme catalyses a 1-O-alkyl-2-acetyl-sn-glycero-3-phosphocholine + H2O = a 1-O-alkyl-sn-glycero-3-phosphocholine + acetate + H(+). It catalyses the reaction 1-hexadecanoyl-sn-glycero-3-phosphocholine + H2O = sn-glycerol 3-phosphocholine + hexadecanoate + H(+). The catalysed reaction is 2 1-hexadecanoyl-sn-glycero-3-phosphocholine = 1,2-dihexadecanoyl-sn-glycero-3-phosphocholine + sn-glycerol 3-phosphocholine. It carries out the reaction 1-octadecanoyl-sn-glycero-3-phosphocholine + H2O = octadecanoate + sn-glycerol 3-phosphocholine + H(+). The enzyme catalyses 1-(9Z-octadecenoyl)-sn-glycero-3-phosphocholine + H2O = sn-glycerol 3-phosphocholine + (9Z)-octadecenoate + H(+). It catalyses the reaction 1-hexadecanoyl-sn-glycero-3-phosphoethanolamine + H2O = sn-glycero-3-phosphoethanolamine + hexadecanoate + H(+). The catalysed reaction is 1-(9Z-octadecenoyl)-sn-glycero-3-phosphoethanolamine + H2O = sn-glycero-3-phosphoethanolamine + (9Z)-octadecenoate + H(+). It carries out the reaction 1-hexadecanoyl-sn-glycero-3-phosphoethanolamine + 1-hexadecanoyl-sn-glycero-3-phosphocholine = 1,2-dihexadecanoyl-sn-glycero-3-phosphoethanolamine + sn-glycerol 3-phosphocholine. The enzyme catalyses 2-(5Z,8Z,11Z,14Z)-eicosatetraenoyl-sn-glycero-3-phosphocholine + H2O = sn-glycerol 3-phosphocholine + (5Z,8Z,11Z,14Z)-eicosatetraenoate + H(+). It catalyses the reaction 2-hexadecanoyl-sn-glycero-3-phosphocholine + H2O = sn-glycerol 3-phosphocholine + hexadecanoate + H(+). The catalysed reaction is 2 2-hexadecanoyl-sn-glycero-3-phosphocholine = 1,2-dihexadecanoyl-sn-glycero-3-phosphocholine + sn-glycerol 3-phosphocholine. It carries out the reaction 1-O-(9Z)-octadecenoyl-2-O-acetyl-sn-glycero-3-phosphocholine + H2O = 2-acetyl-sn-glycero-3-phosphocholine + (9Z)-octadecenoate + H(+). The enzyme catalyses a 1-acyl-sn-glycero-3-phospho-(1D-myo-inositol) + 1-hexadecanoyl-sn-glycero-3-phosphocholine = a 1-acyl-2-hexadecanoyl-sn-glycero-3-phospho-(1D-myo-inositol) + sn-glycerol 3-phosphocholine. It catalyses the reaction 2 2-(5Z,8Z,11Z,14Z)-eicosatetraenoyl-sn-glycero-3-phosphocholine = 1,2-di-(5Z,8Z,11Z,14Z-eicosatetraenoyl)-sn-glycero-3-phosphocholine + sn-glycerol 3-phosphocholine. Functionally, exhibits lysophospholipase, transacylase, PAF acetylhydrolase and asparaginase activities. Can catalyze three types of transacylation reactions: (1) acyl transfer from 1-acyl-sn-glycero-3-phosphocholine (1-acyl-GPC) to the sn-1(3) positions of glycerol and 2-acylglycerol (sn-1 to -1(3) transfer), (2) acyl transfer from 1-acyl-GPC to the sn-2 positions of 1-acyl-GPC, 1-acyl-sn-glycero-3-phosphoethanolamine (1-acyl-GPE), and other lysophospholipids (sn-1 to -2 transfer) and (3) acyl transfer from 2-acyl-GPC to the sn-1 position of 2-acyl-GPC and 2-acyl-GPE (sn-2 to -1 transfer). Mediates the synthesis of 1-arachidonoyl species of phospholipids by transferring the arachidonoyl residue from 2-arachidonoyl lysophospholipid to the sn-1 position of 2-acyl lysophospholipid. In Homo sapiens (Human), this protein is 60 kDa lysophospholipase (ASPG).